Consider the following 434-residue polypeptide: Arginine/serine-rich coiled-coil protein 2 (434 aa).

The segment covering 1 to 27 (MAASDTERDGLAPEKTSPDRDKKKEQS) has biased composition (basic and acidic residues). Residues 1-230 (MAASDTERDG…PSPPPFRGRN (230 aa)) are disordered. A2 is subject to N-acetylalanine. At S4 the chain carries Phosphoserine. T6 and T16 each carry phosphothreonine. A phosphoserine mark is found at S17, S30, and S32. Residues 35-51 (ASKHHYSRSRSRSRERK) show a composition bias toward basic residues. Over residues 66 to 111 (RSKEGRRHESKDKSSKKHKSEEHNDKEHSSDKGRERLNSSENGEDR) the composition is skewed to basic and acidic residues. S104 is subject to Phosphoserine. Residues 112-214 (HKRKERKSSR…KRIEKPRRFS (103 aa)) show a composition bias toward basic residues. Residues 230–270 (NTAMDAQEALARRLERAKKLQEQREKEMVEKQKQQEIAAAA) adopt a coiled-coil conformation. K375 is covalently cross-linked (Glycyl lysine isopeptide (Lys-Gly) (interchain with G-Cter in SUMO1); alternate). Residue K375 forms a Glycyl lysine isopeptide (Lys-Gly) (interchain with G-Cter in SUMO2); alternate linkage. S376 is subject to Phosphoserine.

This sequence belongs to the RSRC2 family.

The polypeptide is Arginine/serine-rich coiled-coil protein 2 (RSRC2) (Homo sapiens (Human)).